The following is an 869-amino-acid chain: Leucine--tRNA ligase (869 aa).

Positions 51–61 (PYPSGRIHMGH) match the 'HIGH' region motif. Residues 636–640 (KMSKS) carry the 'KMSKS' region motif. Residue lysine 639 participates in ATP binding.

Belongs to the class-I aminoacyl-tRNA synthetase family.

Its subcellular location is the cytoplasm. It catalyses the reaction tRNA(Leu) + L-leucine + ATP = L-leucyl-tRNA(Leu) + AMP + diphosphate. This Dinoroseobacter shibae (strain DSM 16493 / NCIMB 14021 / DFL 12) protein is Leucine--tRNA ligase.